Reading from the N-terminus, the 56-residue chain is Protein SspF (56 aa).

This sequence belongs to the alpha/beta-type SASP family.

May play some important role in either sporulation or the dormant spore. In Priestia megaterium (strain ATCC 12872 / QMB1551) (Bacillus megaterium), this protein is Protein SspF (sspF).